Here is a 178-residue protein sequence, read N- to C-terminus: Crossover junction endodeoxyribonuclease RuvC (178 aa).

Residues Asp-11, Glu-71, and Asp-143 contribute to the active site. Mg(2+) is bound by residues Asp-11, Glu-71, and Asp-143.

This sequence belongs to the RuvC family. As to quaternary structure, homodimer which binds Holliday junction (HJ) DNA. The HJ becomes 2-fold symmetrical on binding to RuvC with unstacked arms; it has a different conformation from HJ DNA in complex with RuvA. In the full resolvosome a probable DNA-RuvA(4)-RuvB(12)-RuvC(2) complex forms which resolves the HJ. Mg(2+) is required as a cofactor.

It is found in the cytoplasm. It catalyses the reaction Endonucleolytic cleavage at a junction such as a reciprocal single-stranded crossover between two homologous DNA duplexes (Holliday junction).. Functionally, the RuvA-RuvB-RuvC complex processes Holliday junction (HJ) DNA during genetic recombination and DNA repair. Endonuclease that resolves HJ intermediates. Cleaves cruciform DNA by making single-stranded nicks across the HJ at symmetrical positions within the homologous arms, yielding a 5'-phosphate and a 3'-hydroxyl group; requires a central core of homology in the junction. The consensus cleavage sequence is 5'-(A/T)TT(C/G)-3'. Cleavage occurs on the 3'-side of the TT dinucleotide at the point of strand exchange. HJ branch migration catalyzed by RuvA-RuvB allows RuvC to scan DNA until it finds its consensus sequence, where it cleaves and resolves the cruciform DNA. The sequence is that of Crossover junction endodeoxyribonuclease RuvC from Neisseria meningitidis serogroup B (strain ATCC BAA-335 / MC58).